The chain runs to 274 residues: Acetyl-coenzyme A carboxylase carboxyl transferase subunit alpha (274 aa).

A CoA carboxyltransferase C-terminal domain is found at 1–245 (MENSQELTPW…RENLKKAIEG (245 aa)).

It belongs to the AccA family. As to quaternary structure, acetyl-CoA carboxylase is a heterohexamer composed of biotin carboxyl carrier protein (AccB), biotin carboxylase (AccC) and two subunits each of ACCase subunit alpha (AccA) and ACCase subunit beta (AccD).

The protein resides in the cytoplasm. The enzyme catalyses N(6)-carboxybiotinyl-L-lysyl-[protein] + acetyl-CoA = N(6)-biotinyl-L-lysyl-[protein] + malonyl-CoA. Its pathway is lipid metabolism; malonyl-CoA biosynthesis; malonyl-CoA from acetyl-CoA: step 1/1. Its function is as follows. Component of the acetyl coenzyme A carboxylase (ACC) complex. First, biotin carboxylase catalyzes the carboxylation of biotin on its carrier protein (BCCP) and then the CO(2) group is transferred by the carboxyltransferase to acetyl-CoA to form malonyl-CoA. This Clostridium acetobutylicum (strain ATCC 824 / DSM 792 / JCM 1419 / IAM 19013 / LMG 5710 / NBRC 13948 / NRRL B-527 / VKM B-1787 / 2291 / W) protein is Acetyl-coenzyme A carboxylase carboxyl transferase subunit alpha.